The following is a 264-amino-acid chain: Small ribosomal subunit protein eS1 (264 aa).

An N6-acetyllysine; alternate modification is found at K34. Residue K34 forms a Glycyl lysine isopeptide (Lys-Gly) (interchain with G-Cter in SUMO2); alternate linkage. Position 56 is an N6-acetyllysine (K56). ADP-ribosyltyrosine is present on Y155. The segment at 232–264 is disordered; sequence HGEGSSSGKATGDETGAKVERADGYEPPVQESV. S236 and S237 each carry phosphoserine. Positions 242-255 are enriched in basic and acidic residues; the sequence is TGDETGAKVERADG. At K249 the chain carries N6-acetyllysine; alternate. K249 is covalently cross-linked (Glycyl lysine isopeptide (Lys-Gly) (interchain with G-Cter in SUMO2); alternate). Phosphotyrosine is present on Y256. S263 is subject to Phosphoserine.

The protein belongs to the eukaryotic ribosomal protein eS1 family. Component of the small ribosomal subunit. Mature ribosomes consist of a small (40S) and a large (60S) subunit. The 40S subunit contains about 33 different proteins and 1 molecule of RNA (18S). The 60S subunit contains about 49 different proteins and 3 molecules of RNA (28S, 5.8S and 5S). Identified in a IGF2BP1-dependent mRNP granule complex containing untranslated mRNAs. Binds with high affinity to IPO4. Interacts with DDIT3. Part of the small subunit (SSU) processome, composed of more than 70 proteins and the RNA chaperone small nucleolar RNA (snoRNA) U3. In terms of processing, ADP-ribosylated at Tyr-155 by PARP1 in presence of HPF1.

Its subcellular location is the cytoplasm. The protein localises to the nucleus. It localises to the nucleolus. Its function is as follows. Component of the small ribosomal subunit. The ribosome is a large ribonucleoprotein complex responsible for the synthesis of proteins in the cell. Part of the small subunit (SSU) processome, first precursor of the small eukaryotic ribosomal subunit. During the assembly of the SSU processome in the nucleolus, many ribosome biogenesis factors, an RNA chaperone and ribosomal proteins associate with the nascent pre-rRNA and work in concert to generate RNA folding, modifications, rearrangements and cleavage as well as targeted degradation of pre-ribosomal RNA by the RNA exosome. May play a role during erythropoiesis through regulation of transcription factor DDIT3. This Macaca fascicularis (Crab-eating macaque) protein is Small ribosomal subunit protein eS1.